The primary structure comprises 479 residues: Putative F-box protein At1g67390 (479 aa).

The 49-residue stretch at 40-88 (DDRISKLPDDVLVMILASLSTEDALKTSVLSTRWKNVWKQVPYLHFDLL) folds into the F-box domain.

In Arabidopsis thaliana (Mouse-ear cress), this protein is Putative F-box protein At1g67390.